The primary structure comprises 838 residues: G-protein coupled receptor-associated sorting protein 2 (838 aa).

4 disordered regions span residues 1–122 (MTGA…GARP), 218–292 (ASNE…SNPF), 349–368 (RFRH…RAQK), and 531–552 (LELS…PSPE). Residues 13 to 31 (KPEKKAGEEVIAGPEREND) show a composition bias toward basic and acidic residues. A compositionally biased stretch (polar residues) spans 220 to 245 (NESGFWSADETSTASSFWTGEETSVR). Basic residues predominate over residues 255–271 (RSRHRAKHQTNPRSRPR). A phosphoserine mark is found at Ser282 and Ser284. Over residues 542–552 (SLLQPDQPSPE) the composition is skewed to polar residues.

Belongs to the GPRASP family. As to quaternary structure, interacts with cytoplasmic tails of a variety of G-protein coupled receptors such as muscarinic acetylcholine receptor M1/CHRM1 and calcitonin receptor/CALCR. In terms of tissue distribution, expressed in the brain.

Its function is as follows. May play a role in regulation of a variety of G-protein coupled receptors. This is G-protein coupled receptor-associated sorting protein 2 (GPRASP2) from Homo sapiens (Human).